The primary structure comprises 112 residues: Cytochrome c type-1 (112 aa).

Cys20, Cys23, His24, and Met85 together coordinate heme c.

Post-translationally, binds 1 heme c group covalently per subunit.

The protein localises to the mitochondrion intermembrane space. Functionally, electron carrier between complex III (ubiquinol-cytochrome c oxireductase) and complex IV (cytochrome c oxidase). This chain is Cytochrome c type-1, found in Ascaris suum (Pig roundworm).